The chain runs to 551 residues: Palmdelphin (551 aa).

Methionine 1 is modified (N-acetylmethionine). The stretch at 12–106 (QAITDKRKIQ…LQISTKEEAI (95 aa)) forms a coiled coil. Residue lysine 125 forms a Glycyl lysine isopeptide (Lys-Gly) (interchain with G-Cter in SUMO2) linkage. The residue at position 135 (serine 135) is a Phosphoserine. A Glycyl lysine isopeptide (Lys-Gly) (interchain with G-Cter in SUMO1); alternate cross-link involves residue lysine 179. A Glycyl lysine isopeptide (Lys-Gly) (interchain with G-Cter in SUMO2); alternate cross-link involves residue lysine 179. A compositionally biased stretch (basic and acidic residues) spans 248–259 (ERNSKSPTEYHE). A disordered region spans residues 248-280 (ERNSKSPTEYHEPVYANPFYRPTTPQRETVTPG). Over residues 270 to 280 (TTPQRETVTPG) the composition is skewed to polar residues. Phosphothreonine is present on threonine 271. Phosphoserine occurs at positions 321, 370, 384, and 385. Disordered regions lie at residues 342–392 (TPQK…QEDE) and 449–535 (DEEE…EDPS). The span at 484–495 (KRSEASPHENTN) shows a compositional bias: basic and acidic residues. Phosphoserine is present on residues serine 498, serine 515, and serine 520.

The protein belongs to the paralemmin family. In terms of assembly, interacts with GLUL. Phosphorylated. As to expression, ubiquitous. Most abundant in cardiac and skeletal muscle.

Its subcellular location is the cytoplasm. It is found in the cell projection. The protein resides in the dendrite. The protein localises to the dendritic spine. This Homo sapiens (Human) protein is Palmdelphin (PALMD).